The chain runs to 369 residues: Maltose/maltodextrin import ATP-binding protein MalK (369 aa).

The region spanning 4-234 (VQLRNVTKAW…PADRFVAGFI (231 aa)) is the ABC transporter domain. An ATP-binding site is contributed by 36–43 (GPSGCGKS).

Belongs to the ABC transporter superfamily. Maltooligosaccharide importer (TC 3.A.1.1.1) family. In terms of assembly, the complex is composed of two ATP-binding proteins (MalK), two transmembrane proteins (MalG and MalK) and a solute-binding protein (MalE).

The protein resides in the cell inner membrane. The catalysed reaction is D-maltose(out) + ATP + H2O = D-maltose(in) + ADP + phosphate + H(+). In terms of biological role, part of the ABC transporter complex MalEFGK involved in maltose/maltodextrin import. Responsible for energy coupling to the transport system. The protein is Maltose/maltodextrin import ATP-binding protein MalK of Salmonella choleraesuis (strain SC-B67).